The following is a 584-amino-acid chain: Membrane protein insertase YidC (584 aa).

The next 5 membrane-spanning stretches (helical) occupy residues 5–25, 358–378, 428–448, 478–498, and 516–536; these read SVIGLVLISLIMIVWMQFMAP, FIGNYGLIIIIFAFLIKLVTY, LGGCLPVVLQMPLLFAMFYVF, IPLYGDHIALFPILMAVAVFL, and IYIFPVMMLLFFNNMPAGLGL. The segment at 563–584 is disordered; sequence ALSPVVAAPPKAPKKKKNARKR. Basic residues predominate over residues 574–584; sequence APKKKKNARKR.

The protein belongs to the OXA1/ALB3/YidC family. Type 1 subfamily. In terms of assembly, interacts with the Sec translocase complex via SecD. Specifically interacts with transmembrane segments of nascent integral membrane proteins during membrane integration.

The protein resides in the cell inner membrane. Functionally, required for the insertion and/or proper folding and/or complex formation of integral membrane proteins into the membrane. Involved in integration of membrane proteins that insert both dependently and independently of the Sec translocase complex, as well as at least some lipoproteins. Aids folding of multispanning membrane proteins. This is Membrane protein insertase YidC from Prosthecochloris aestuarii (strain DSM 271 / SK 413).